Consider the following 517-residue polypeptide: ADP-ribosylation factor GTPase-activating protein 3 (517 aa).

Positions 10 to 126 (LTIFKRLRSV…IKALASQATR (117 aa)) constitute an Arf-GAP domain. The C4-type zinc-finger motif lies at 25-48 (CFDCGAKNPSWASITYGVFLCIDC). A disordered region spans residues 139–200 (VPPSSPPPKE…EQGPSVEGLN (62 aa)). Residues 159-176 (EVSSTGWASAQPEPSLTP) show a composition bias toward polar residues. S231 carries the phosphoserine modification. The stretch at 243-263 (NEIEKQAQAVDKMNAQEDLLS) forms a coiled coil. A phosphoserine mark is found at S271 and S275. A compositionally biased stretch (basic and acidic residues) spans 291-305 (EKMNMSGKKKAESER). 2 disordered regions span residues 291–349 (EKMN…SDDS) and 362–422 (MELR…QKKF). The segment covering 312–333 (NSRSGISHSVTSDMQTIEQETP) has biased composition (polar residues). S371 carries the post-translational modification Phosphoserine. Basic and acidic residues predominate over residues 379 to 390 (YWKKETIKDTDP). S429, S452, S454, S456, S458, and S459 each carry phosphoserine.

It localises to the cytoplasm. It is found in the golgi apparatus membrane. Its activity is regulated as follows. GAP activity stimulated by phosphatidylinositol 4,5-bisphosphate (PIP2). GTPase-activating protein (GAP) for ADP ribosylation factor 1 (ARF1). Hydrolysis of ARF1-bound GTP may lead to dissociation of coatomer from Golgi-derived membranes to allow fusion with target membranes. The protein is ADP-ribosylation factor GTPase-activating protein 3 of Bos taurus (Bovine).